Here is a 581-residue protein sequence, read N- to C-terminus: 4-hydroxy-3-methylbut-2-en-1-yl diphosphate synthase (flavodoxin) (581 aa).

Residues C489, C492, C523, and E530 each contribute to the [4Fe-4S] cluster site.

The protein belongs to the IspG family. The cofactor is [4Fe-4S] cluster.

It carries out the reaction (2E)-4-hydroxy-3-methylbut-2-enyl diphosphate + oxidized [flavodoxin] + H2O + 2 H(+) = 2-C-methyl-D-erythritol 2,4-cyclic diphosphate + reduced [flavodoxin]. It participates in isoprenoid biosynthesis; isopentenyl diphosphate biosynthesis via DXP pathway; isopentenyl diphosphate from 1-deoxy-D-xylulose 5-phosphate: step 5/6. Functionally, converts 2C-methyl-D-erythritol 2,4-cyclodiphosphate (ME-2,4cPP) into 1-hydroxy-2-methyl-2-(E)-butenyl 4-diphosphate. This chain is 4-hydroxy-3-methylbut-2-en-1-yl diphosphate synthase (flavodoxin), found in Porphyromonas gingivalis (strain ATCC BAA-308 / W83).